We begin with the raw amino-acid sequence, 64 residues long: Conotoxin Ts-011 (64 aa).

The N-terminal stretch at 1–22 (MHCLPVLVILLLLIASTPSVDA) is a signal peptide. The propeptide occupies 23-52 (RPKTKDDVPPASFHGADDANRILQTLWNLR). Position 63 is an isoleucine amide (isoleucine 63).

The protein belongs to the conotoxin T superfamily. In terms of processing, contains 2 disulfide bonds that can be either 'C1-C3, C2-C4' or 'C1-C4, C2-C3', since these disulfide connectivities have been observed for conotoxins with cysteine framework V (for examples, see AC P0DQQ7 and AC P81755). Expressed by the venom duct.

Its subcellular location is the secreted. This chain is Conotoxin Ts-011, found in Conus tessulatus (Tessellate cone).